The sequence spans 129 residues: UPF0102 protein Ctha_1382 (129 aa).

The protein belongs to the UPF0102 family.

The sequence is that of UPF0102 protein Ctha_1382 from Chloroherpeton thalassium (strain ATCC 35110 / GB-78).